Consider the following 344-residue polypeptide: Follistatin (344 aa).

The N-terminal stretch at 1-29 (MARPRHQPGGLCLLLLLLCQFMEDRSAQA) is a signal peptide. Positions 30-103 (GNCWLRQAKN…TCENVDCGPG (74 aa)) constitute a TB domain. 8 disulfides stabilise this stretch: cysteine 32–cysteine 55, cysteine 42–cysteine 88, cysteine 56–cysteine 91, cysteine 95–cysteine 106, cysteine 100–cysteine 116, cysteine 118–cysteine 150, cysteine 122–cysteine 143, and cysteine 132–cysteine 164. Residues 94 to 117 (TCENVDCGPGKKCRMNKKNKPRCV) enclose the Follistatin-like 1 domain. 3 consecutive Kazal-like domains span residues 112-166 (NKPR…KCKK), 186-241 (NAYC…KCIK), and 261-318 (KVGR…SCNS). N-linked (GlcNAc...) asparagine glycosylation occurs at asparagine 124. The 24-residue stretch at 167–190 (TCRDVFCPGSSTCVVDQTNNAYCV) folds into the Follistatin-like 2 domain. 3 disulfide bridges follow: cysteine 192/cysteine 225, cysteine 196/cysteine 218, and cysteine 207/cysteine 239. In terms of domain architecture, Follistatin-like 3 spans 244 to 268 (SCDDIQCTGGKKCLWDFKVGRGRCS). Intrachain disulfides connect cysteine 270-cysteine 302, cysteine 274-cysteine 295, and cysteine 284-cysteine 316. N-linked (GlcNAc...) asparagine glycosylation is present at asparagine 288. The interval 316–344 (CNSISEDTEDEEEDEDQDYSFPISSILEW) is disordered. The segment covering 321-333 (EDTEDEEEDEDQD) has biased composition (acidic residues).

In terms of assembly, interacts with GDF11. Interacts with activin A/INHBA. Interacts with myostatin/MSTN.

Its subcellular location is the secreted. The protein localises to the nucleus. It is found in the nucleolus. Functionally, multifunctional regulatory protein whose primary function is to antagonize members of the transforming growth factor beta (TGF-beta) superfamily including activin, myostatin, GDF11 or bone morphogenetic proteins (BMPs). Mechanistically, binds to these ligands in the extracellular space, blocking their type II receptor-binding site to inhibit downstream signaling. Plays an essential role in muscle fiber formation and growth both by preventing the repressive effects of myostatin and through SMAD3/AKT/mTOR signaling independently of myostatin. Also promotes neural differentiation by antagonizing the action BMP4. Acts as a specific inhibitor of the biosynthesis and secretion of pituitary follicle stimulating hormone (FSH) by sequestering activin A/INHBA. On the other hand, translocates into the nucleus where it down-regulates rRNA synthesis and ribosome biogenesis to maintain cellular energy homeostasis by binding to rDNA. The polypeptide is Follistatin (Bos taurus (Bovine)).